We begin with the raw amino-acid sequence, 506 residues long: NAD(P)H-quinone oxidoreductase subunit 2 (506 aa).

13 helical membrane-spanning segments follow: residues 14–34, 42–62, 79–99, 108–128, 132–152, 167–187, 206–226, 240–260, 276–296, 302–322, 330–350, 374–394, and 409–429; these read AIIP…VDLA, WAPI…ALQW, LAIA…LISW, PIGE…LLCG, LISI…LSGY, LLVG…LYGL, FITS…IAAV, PTPV…AFAI, LLFT…ALAQ, MLAY…VSGT, VLYL…VILF, LGLS…GFFG, and LLVI…ISVI.

Belongs to the complex I subunit 2 family. As to quaternary structure, NDH-1 can be composed of about 15 different subunits; different subcomplexes with different compositions have been identified which probably have different functions.

The protein localises to the cellular thylakoid membrane. It carries out the reaction a plastoquinone + NADH + (n+1) H(+)(in) = a plastoquinol + NAD(+) + n H(+)(out). The catalysed reaction is a plastoquinone + NADPH + (n+1) H(+)(in) = a plastoquinol + NADP(+) + n H(+)(out). In terms of biological role, NDH-1 shuttles electrons from an unknown electron donor, via FMN and iron-sulfur (Fe-S) centers, to quinones in the respiratory and/or the photosynthetic chain. The immediate electron acceptor for the enzyme in this species is believed to be plastoquinone. Couples the redox reaction to proton translocation, and thus conserves the redox energy in a proton gradient. Cyanobacterial NDH-1 also plays a role in inorganic carbon-concentration. This is NAD(P)H-quinone oxidoreductase subunit 2 from Prochlorococcus marinus (strain MIT 9312).